Consider the following 490-residue polypeptide: Sushi domain-containing protein 4 (490 aa).

Residues 1 to 21 (MYHGMNPSNGDGFLEQQQQQQ) form a disordered region. A signal peptide spans 1-41 (MYHGMNPSNGDGFLEQQQQQQQPQSPQRLLAVILWFQLALC). Topologically, residues 42–319 (FGPAQLTGGF…PSTHETLLTT (278 aa)) are extracellular. Sushi domains are found at residues 55–119 (QVCA…ICVQ), 120–179 (EDCR…ICQG), 178–239 (QGCL…RCLA), and 241–304 (EVCP…YCIK). Cystine bridges form between C57/C99, C85/C117, C122/C165, C147/C177, C180/C224, C210/C237, C243/C289, and C274/C302. N104 and N134 each carry an N-linked (GlcNAc...) asparagine glycan. N192 is a glycosylation site (N-linked (GlcNAc...) asparagine). Residues 320 to 340 (WKIVAFTATSVLLVLLLVILA) traverse the membrane as a helical segment. The Cytoplasmic segment spans residues 341–490 (RMFQTKFKAH…DEIPLMEEDP (150 aa)). The segment at 401–490 (GCPLPVDDQS…DEIPLMEEDP (90 aa)) is disordered. A compositionally biased stretch (polar residues) spans 430-456 (CDSVSGSSELLQSLYSPPRCQESTHPA). Residues 479-490 (IADEIPLMEEDP) are compositionally biased toward acidic residues.

As to expression, isoform 3 is the predominant isoform in all tissues except cortex, cerebellum, kidney, and breast. Isoform 1 is found primarily in the esophagus and the brain.

The protein resides in the membrane. The protein localises to the secreted. In terms of biological role, acts as a complement inhibitor by disrupting the formation of the classical C3 convertase. Isoform 3 inhibits the classical complement pathway, while membrane-bound isoform 1 inhibits deposition of C3b via both the classical and alternative complement pathways. The sequence is that of Sushi domain-containing protein 4 (SUSD4) from Homo sapiens (Human).